The sequence spans 438 residues: 3-phosphoshikimate 1-carboxyvinyltransferase (438 aa).

The 3-phosphoshikimate site is built by lysine 23, serine 24, and arginine 28. Lysine 23 serves as a coordination point for phosphoenolpyruvate. 2 residues coordinate phosphoenolpyruvate: glycine 94 and arginine 122. Positions 167, 169, 321, and 348 each coordinate 3-phosphoshikimate. Residue glutamine 169 coordinates phosphoenolpyruvate. Aspartate 321 serves as the catalytic Proton acceptor. 2 residues coordinate phosphoenolpyruvate: arginine 352 and arginine 393.

Belongs to the EPSP synthase family. Monomer.

Its subcellular location is the cytoplasm. It catalyses the reaction 3-phosphoshikimate + phosphoenolpyruvate = 5-O-(1-carboxyvinyl)-3-phosphoshikimate + phosphate. It functions in the pathway metabolic intermediate biosynthesis; chorismate biosynthesis; chorismate from D-erythrose 4-phosphate and phosphoenolpyruvate: step 6/7. Its function is as follows. Catalyzes the transfer of the enolpyruvyl moiety of phosphoenolpyruvate (PEP) to the 5-hydroxyl of shikimate-3-phosphate (S3P) to produce enolpyruvyl shikimate-3-phosphate and inorganic phosphate. In Helicobacter hepaticus (strain ATCC 51449 / 3B1), this protein is 3-phosphoshikimate 1-carboxyvinyltransferase.